Consider the following 370-residue polypeptide: Queuine tRNA-ribosyltransferase (370 aa).

Catalysis depends on D92, which acts as the Proton acceptor. Residues 92–96, D146, Q190, and G217 contribute to the substrate site; that span reads DSGGF. The RNA binding stretch occupies residues 248 to 254; sequence GVGTPEN. The Nucleophile role is filled by D267. Positions 305, 307, 310, and 336 each coordinate Zn(2+).

This sequence belongs to the queuine tRNA-ribosyltransferase family. Homodimer. Within each dimer, one monomer is responsible for RNA recognition and catalysis, while the other monomer binds to the replacement base PreQ1. The cofactor is Zn(2+).

It catalyses the reaction 7-aminomethyl-7-carbaguanine + guanosine(34) in tRNA = 7-aminomethyl-7-carbaguanosine(34) in tRNA + guanine. Its pathway is tRNA modification; tRNA-queuosine biosynthesis. Functionally, catalyzes the base-exchange of a guanine (G) residue with the queuine precursor 7-aminomethyl-7-deazaguanine (PreQ1) at position 34 (anticodon wobble position) in tRNAs with GU(N) anticodons (tRNA-Asp, -Asn, -His and -Tyr). Catalysis occurs through a double-displacement mechanism. The nucleophile active site attacks the C1' of nucleotide 34 to detach the guanine base from the RNA, forming a covalent enzyme-RNA intermediate. The proton acceptor active site deprotonates the incoming PreQ1, allowing a nucleophilic attack on the C1' of the ribose to form the product. After dissociation, two additional enzymatic reactions on the tRNA convert PreQ1 to queuine (Q), resulting in the hypermodified nucleoside queuosine (7-(((4,5-cis-dihydroxy-2-cyclopenten-1-yl)amino)methyl)-7-deazaguanosine). In Desulforapulum autotrophicum (strain ATCC 43914 / DSM 3382 / VKM B-1955 / HRM2) (Desulfobacterium autotrophicum), this protein is Queuine tRNA-ribosyltransferase.